Consider the following 252-residue polypeptide: Trans-aconitate 2-methyltransferase (252 aa).

It belongs to the methyltransferase superfamily. Tam family.

The protein localises to the cytoplasm. The catalysed reaction is trans-aconitate + S-adenosyl-L-methionine = (E)-3-(methoxycarbonyl)pent-2-enedioate + S-adenosyl-L-homocysteine. Catalyzes the S-adenosylmethionine monomethyl esterification of trans-aconitate. The protein is Trans-aconitate 2-methyltransferase of Escherichia coli O6:H1 (strain CFT073 / ATCC 700928 / UPEC).